Here is a 114-residue protein sequence, read N- to C-terminus: Large ribosomal subunit protein uL22 (114 aa).

This sequence belongs to the universal ribosomal protein uL22 family. As to quaternary structure, part of the 50S ribosomal subunit.

Its function is as follows. This protein binds specifically to 23S rRNA; its binding is stimulated by other ribosomal proteins, e.g. L4, L17, and L20. It is important during the early stages of 50S assembly. It makes multiple contacts with different domains of the 23S rRNA in the assembled 50S subunit and ribosome. Functionally, the globular domain of the protein is located near the polypeptide exit tunnel on the outside of the subunit, while an extended beta-hairpin is found that lines the wall of the exit tunnel in the center of the 70S ribosome. The sequence is that of Large ribosomal subunit protein uL22 from Streptococcus agalactiae serotype Ia (strain ATCC 27591 / A909 / CDC SS700).